We begin with the raw amino-acid sequence, 268 residues long: Lipopolysaccharide core heptose(I) kinase WaaP (268 aa).

Phosphotyrosine; by autocatalysis is present on residues tyrosine 30, tyrosine 48, and tyrosine 98. Aspartate 163 is an active-site residue. A phosphotyrosine; by autocatalysis mark is found at tyrosine 165, tyrosine 211, tyrosine 231, tyrosine 258, and tyrosine 264.

It belongs to the protein kinase superfamily. KdkA/RfaP family. As to quaternary structure, interacts with acyl-AcpP. The WaaP hydrophobic channel can accommodate acyl chains of different lengths, but myristyl-ACP is likely its physiological binding partner. Mg(2+) serves as cofactor.

Its subcellular location is the cytoplasm. The enzyme catalyses an L-alpha-D-Hep-(1-&gt;3)-L-alpha-D-Hep-(1-&gt;5)-[alpha-Kdo-(2-&gt;4)]-alpha-Kdo-(2-&gt;6)-lipid A + ATP = an L-alpha-D-Hep-(1-&gt;3)-4-O-phospho-L-alpha-D-Hep-(1-&gt;5)-[alpha-Kdo-(2-&gt;4)]-alpha-Kdo-(2-&gt;6)-lipid A + ADP + H(+). It carries out the reaction L-tyrosyl-[protein] + ATP = O-phospho-L-tyrosyl-[protein] + ADP + H(+). It participates in bacterial outer membrane biogenesis; LPS core biosynthesis. Acylated-acyl carrier protein (acyl-ACP) acts as a very tightly bound cofactor necessary for the production and stability of active WaaP kinase. In terms of biological role, kinase involved in the biosynthesis of the core oligosaccharide region of lipopolysaccharide (LPS). Catalyzes the phosphorylation of heptose I (HepI), the first heptose added to the Kdo2-lipid A module. Also has protein-tyrosine kinase activity: autophosphorylates on all Tyr residues; in vitro can phosphorylate poly(Glu,Tyr). In Pseudomonas aeruginosa (strain ATCC 15692 / DSM 22644 / CIP 104116 / JCM 14847 / LMG 12228 / 1C / PRS 101 / PAO1), this protein is Lipopolysaccharide core heptose(I) kinase WaaP.